Reading from the N-terminus, the 424-residue chain is 26S proteasome regulatory subunit 4 homolog (424 aa).

Positions 1 to 11 (MSRDKSERDNL) are enriched in basic and acidic residues. The disordered stretch occupies residues 1–33 (MSRDKSERDNLQDTTTINLRRRRRVKEGKAASK). 210-217 (GLPGTGKT) serves as a coordination point for ATP.

The protein belongs to the AAA ATPase family. As to quaternary structure, the 26S proteasome consists of a 20S proteasome core and two 19S regulatory subunits. The 20S proteasome core is composed of 28 subunits that are arranged in four stacked rings, resulting in a barrel-shaped structure. The two end rings are each formed by seven alpha subunits, and the two central rings are each formed by seven beta subunits. The catalytic chamber with the active sites is on the inside of the barrel.

The protein resides in the cytoplasm. Its subcellular location is the nucleus. In terms of biological role, acts as a regulatory subunit of the 26S proteasome which degrades poly-ubiquitinated proteins in the cytoplasm and in the nucleus. It is essential for the regulated turnover of proteins and for the removal of misfolded proteins. The proteasome is a multicatalytic proteinase complex that is characterized by its ability to cleave peptides with Arg, Phe, Tyr, Leu, and Glu adjacent to the leaving group at neutral or slightly basic pH. The chain is 26S proteasome regulatory subunit 4 homolog (RPT2) from Encephalitozoon cuniculi (strain GB-M1) (Microsporidian parasite).